The primary structure comprises 26 residues: Melittin (26 aa).

The residue at position 1 (G1) is an N-formylglycine; partial. Position 26 is a glutamic acid 1-amide (E26).

This sequence belongs to the melittin family. Monomer (in solution and for integration into membranes), homotetramer (in solution and potentially as a toroidal pore in membranes), and potenially homomultimer (as a toroidal pore in membranes). In terms of tissue distribution, expressed by the venom gland.

It is found in the secreted. Its subcellular location is the target cell membrane. Its function is as follows. Main toxin of bee venom with strong hemolytic activity and antimicrobial activity. It has enhancing effects on bee venom phospholipase A2 activity. This amphipathic toxin binds to negatively charged membrane surface and forms pore by inserting into lipid bilayers inducing the leakage of ions and molecules and the enhancement of permeability that ultimately leads to cell lysis. It acts as a voltage-gated pore with higher selectivity for anions over cations. The ion conductance has been shown to be voltage-dependent. Self-association of melittin in membranes is promoted by high ionic strength, but not by the presence of negatively charged lipids. In vivo, intradermal injection into healthy human volunteers produce sharp pain sensation and an inflammatory response. It produces pain by activating primary nociceptor cells directly and indirectly due to its ability to activate plasma membrane phospholipase A2 and its pore-forming activity. This Apis dorsata (Giant honeybee) protein is Melittin (MELT).